The primary structure comprises 346 residues: Ribosomal RNA small subunit methyltransferase H (346 aa).

S-adenosyl-L-methionine-binding positions include 46–48 (GGY), aspartate 63, phenylalanine 90, aspartate 113, and glutamine 120. Residues 270–327 (GGSAGSRHMPETHMRLPSFTPAVKGAVGPTPEEEERNPRARSAKLRAGIRTENSPLED) form a disordered region.

It belongs to the methyltransferase superfamily. RsmH family.

It is found in the cytoplasm. It carries out the reaction cytidine(1402) in 16S rRNA + S-adenosyl-L-methionine = N(4)-methylcytidine(1402) in 16S rRNA + S-adenosyl-L-homocysteine + H(+). Functionally, specifically methylates the N4 position of cytidine in position 1402 (C1402) of 16S rRNA. The chain is Ribosomal RNA small subunit methyltransferase H from Brucella ovis (strain ATCC 25840 / 63/290 / NCTC 10512).